A 664-amino-acid chain; its full sequence is Macoilin (664 aa).

Transmembrane regions (helical) follow at residues 28 to 48, 75 to 95, 120 to 140, and 154 to 174; these read TFLY…DFVL, AFSV…LLFI, VCLP…AIRF, and FAAH…KSYV. Basic and acidic residues predominate over residues 253-265; it reads REKGKEKDKDAKK. Residues 253–274 form a disordered region; that stretch reads REKGKEKDKDAKKHNLGINNNN. Ser-305 is subject to Phosphoserine. Polar residues predominate over residues 320–348; sequence KNYKNASGVVNSSPRSHSATNGSIPSSSS. The segment at 320–367 is disordered; that stretch reads KNYKNASGVVNSSPRSHSATNGSIPSSSSKNEKKQKCTSKSPSAHKDL. N-linked (GlcNAc...) asparagine glycosylation is present at Asn-324. Phosphoserine is present on Ser-332. N-linked (GlcNAc...) asparagine glycosylation is found at Asn-340 and Asn-452. The disordered stretch occupies residues 630–664; the sequence is TSPLSPVSPHYSSKFVETSPSGLDPNASVYQPLKK. Phosphoserine is present on residues Ser-631 and Ser-634. N-linked (GlcNAc...) asparagine glycosylation is present at Asn-655.

Belongs to the macoilin family.

It localises to the rough endoplasmic reticulum membrane. The protein localises to the nucleus membrane. Functionally, plays a role in the regulation of neuronal activity. This Sus scrofa (Pig) protein is Macoilin (MACO1).